The following is a 287-amino-acid chain: Protease HtpX (287 aa).

The next 2 membrane-spanning stretches (helical) occupy residues 4-24 and 36-56; these read VMLF…VLNI and LSGL…ISLM. Position 143 (His-143) interacts with Zn(2+). Glu-144 is an active-site residue. Residue His-147 participates in Zn(2+) binding. 2 helical membrane passes run 158–178 and 192–212; these read LMQG…ANIV and MVYF…ASFI. Glu-221 is a binding site for Zn(2+).

Belongs to the peptidase M48B family. It depends on Zn(2+) as a cofactor.

It localises to the cell inner membrane. The sequence is that of Protease HtpX from Vibrio atlanticus (strain LGP32) (Vibrio splendidus (strain Mel32)).